A 194-amino-acid chain; its full sequence is dTTP/UTP pyrophosphatase (194 aa).

The active-site Proton acceptor is aspartate 73.

It belongs to the Maf family. YhdE subfamily. The cofactor is a divalent metal cation.

It localises to the cytoplasm. The enzyme catalyses dTTP + H2O = dTMP + diphosphate + H(+). The catalysed reaction is UTP + H2O = UMP + diphosphate + H(+). Its function is as follows. Nucleoside triphosphate pyrophosphatase that hydrolyzes dTTP and UTP. May have a dual role in cell division arrest and in preventing the incorporation of modified nucleotides into cellular nucleic acids. The chain is dTTP/UTP pyrophosphatase from Clostridium botulinum (strain Okra / Type B1).